The following is a 239-amino-acid chain: Ribonuclease 3 (239 aa).

An RNase III domain is found at 12-137 (ISRLEALIGY…LIATLYLDGG (126 aa)). Glu-50 provides a ligand contact to Mg(2+). The active site involves Asp-54. Mg(2+)-binding residues include Asp-123 and Glu-126. Glu-126 is an active-site residue. In terms of domain architecture, DRBM spans 162–231 (DAKTELQEWA…ATRLLEREGV (70 aa)).

Belongs to the ribonuclease III family. Homodimer. The cofactor is Mg(2+).

It is found in the cytoplasm. The catalysed reaction is Endonucleolytic cleavage to 5'-phosphomonoester.. Digests double-stranded RNA. Involved in the processing of primary rRNA transcript to yield the immediate precursors to the large and small rRNAs (23S and 16S). Processes some mRNAs, and tRNAs when they are encoded in the rRNA operon. Processes pre-crRNA and tracrRNA of type II CRISPR loci if present in the organism. The chain is Ribonuclease 3 from Agrobacterium fabrum (strain C58 / ATCC 33970) (Agrobacterium tumefaciens (strain C58)).